A 262-amino-acid polypeptide reads, in one-letter code: Zinc import ATP-binding protein ZnuC (262 aa).

The ABC transporter domain occupies 5–220 (IELQDICVDF…PSYLAMFGHR (216 aa)). 37–44 (GPNGAGKS) provides a ligand contact to ATP.

Belongs to the ABC transporter superfamily. Zinc importer (TC 3.A.1.15.5) family. In terms of assembly, the complex is composed of two ATP-binding proteins (ZnuC), two transmembrane proteins (ZnuB) and a solute-binding protein (ZnuA).

It localises to the cell inner membrane. It catalyses the reaction Zn(2+)(out) + ATP(in) + H2O(in) = Zn(2+)(in) + ADP(in) + phosphate(in) + H(+)(in). Part of the ABC transporter complex ZnuABC involved in zinc import. Responsible for energy coupling to the transport system. The polypeptide is Zinc import ATP-binding protein ZnuC (Vibrio cholerae serotype O1 (strain ATCC 39315 / El Tor Inaba N16961)).